Consider the following 318-residue polypeptide: Ribosomal RNA small subunit methyltransferase H (318 aa).

S-adenosyl-L-methionine-binding positions include 35 to 37, D55, F84, D105, and Q112; that span reads AGH. Residues 294–318 are disordered; that stretch reads SDSELSENNRSRSAKLRIAEKIKSR.

The protein belongs to the methyltransferase superfamily. RsmH family.

Its subcellular location is the cytoplasm. It carries out the reaction cytidine(1402) in 16S rRNA + S-adenosyl-L-methionine = N(4)-methylcytidine(1402) in 16S rRNA + S-adenosyl-L-homocysteine + H(+). Specifically methylates the N4 position of cytidine in position 1402 (C1402) of 16S rRNA. This chain is Ribosomal RNA small subunit methyltransferase H, found in Enterococcus faecalis (strain ATCC 700802 / V583).